Reading from the N-terminus, the 63-residue chain is Putative conjugal transfer lipoprotein XF_a0011.1 (63 aa).

The signal sequence occupies residues 1–15 (MRYTFGIVTVYLLAG). Residue C16 is the site of N-palmitoyl cysteine attachment. C16 is lipidated: S-diacylglycerol cysteine.

The protein to B.suis ORF12 in VirB region.

Its subcellular location is the cell inner membrane. This chain is Putative conjugal transfer lipoprotein XF_a0011.1, found in Xylella fastidiosa (strain 9a5c).